The chain runs to 232 residues: Ribonuclease 3 (232 aa).

The region spanning 9–131 (INLLQKKLGY…IIGGIFLDSN (123 aa)) is the RNase III domain. Glu44 is a binding site for Mg(2+). Residue Asp48 is part of the active site. The Mg(2+) site is built by Asp117 and Glu120. The active site involves Glu120. The region spanning 158–228 (DPKTRLQEYL…AENALKFLIE (71 aa)) is the DRBM domain.

This sequence belongs to the ribonuclease III family. As to quaternary structure, homodimer. It depends on Mg(2+) as a cofactor.

The protein resides in the cytoplasm. The catalysed reaction is Endonucleolytic cleavage to 5'-phosphomonoester.. Functionally, digests double-stranded RNA. Involved in the processing of primary rRNA transcript to yield the immediate precursors to the large and small rRNAs (23S and 16S). Processes some mRNAs, and tRNAs when they are encoded in the rRNA operon. Processes pre-crRNA and tracrRNA of type II CRISPR loci if present in the organism. In Blochmanniella floridana, this protein is Ribonuclease 3.